We begin with the raw amino-acid sequence, 540 residues long: Chaperonin GroEL (540 aa).

ATP contacts are provided by residues 30–33 (TLGP), Lys51, 87–91 (DGTTT), Gly415, and Asp495.

It belongs to the chaperonin (HSP60) family. As to quaternary structure, forms a cylinder of 14 subunits composed of two heptameric rings stacked back-to-back. Interacts with the co-chaperonin GroES.

The protein localises to the cytoplasm. It catalyses the reaction ATP + H2O + a folded polypeptide = ADP + phosphate + an unfolded polypeptide.. Its function is as follows. Together with its co-chaperonin GroES, plays an essential role in assisting protein folding. The GroEL-GroES system forms a nano-cage that allows encapsulation of the non-native substrate proteins and provides a physical environment optimized to promote and accelerate protein folding. The protein is Chaperonin GroEL of Serratia ficaria.